Here is a 519-residue protein sequence, read N- to C-terminus: Ent-kaurene oxidase (519 aa).

The Chloroplast intermembrane portion of the chain corresponds to 1–10; the sequence is MDTLLSLQAV. Residues 11 to 31 traverse the membrane as a helical segment; it reads PAAAAIGGPVVAIGGITLFFI. Residues 32 to 519 lie on the Cytoplasmic side of the membrane; that stretch reads REYVKDQRKK…PRLRDRVCVS (488 aa). Cys458 serves as a coordination point for heme.

The protein belongs to the cytochrome P450 family. The cofactor is heme.

Its subcellular location is the plastid. It is found in the chloroplast outer membrane. The catalysed reaction is ent-kaur-16-ene + 3 reduced [NADPH--hemoprotein reductase] + 3 O2 = ent-kaur-16-en-19-oate + 3 oxidized [NADPH--hemoprotein reductase] + 4 H2O + 4 H(+). It participates in plant hormone biosynthesis; gibberellin biosynthesis. Catalyzes three successive oxidations of the 4-methyl group of ent-kaurene giving kaurenoic acid, a key step in gibberellins (GAs) biosynthesis. GAs, which are involved many processes, including stem elongation, play a central role in plant development. This Salvia miltiorrhiza (Chinese sage) protein is Ent-kaurene oxidase.